A 500-amino-acid chain; its full sequence is Vitamin D(3) 25-hydroxylase (500 aa).

Cys446 serves as a coordination point for heme.

The protein belongs to the cytochrome P450 family. Heme is required as a cofactor. Found in liver and kidney.

Its subcellular location is the endoplasmic reticulum membrane. It localises to the microsome membrane. The enzyme catalyses calciol + reduced [NADPH--hemoprotein reductase] + O2 = calcidiol + oxidized [NADPH--hemoprotein reductase] + H2O + H(+). The catalysed reaction is alfacalcidol + reduced [NADPH--hemoprotein reductase] + O2 = calcitriol + oxidized [NADPH--hemoprotein reductase] + H2O + H(+). It carries out the reaction dodecanoate + reduced [NADPH--hemoprotein reductase] + O2 = 12-hydroxydodecanoate + oxidized [NADPH--hemoprotein reductase] + H2O + H(+). It catalyses the reaction dodecanoate + reduced [NADPH--hemoprotein reductase] + O2 = 11-hydroxydodecanoate + oxidized [NADPH--hemoprotein reductase] + H2O + H(+). The enzyme catalyses 5beta-cholestane-3alpha,7alpha-diol + reduced [NADPH--hemoprotein reductase] + O2 = 5beta-cholestane-3alpha,7alpha,25-triol + oxidized [NADPH--hemoprotein reductase] + H2O + H(+). The catalysed reaction is 5beta-cholestane-3alpha,7alpha,12alpha-triol + reduced [NADPH--hemoprotein reductase] + O2 = 5beta-cholestane-3alpha,7alpha,12alpha,25-tetrol + oxidized [NADPH--hemoprotein reductase] + H2O + H(+). In terms of biological role, catalyzes the 25-hydroxylation of vitamin D(3) (calciol), 1alpha-hydroxyvitamin D(3) (alphacalcidiol) and some C27 steroids. In addition the enzyme catalyzes the hydroxylation of positions 11 and 12 of dodecanoate. The polypeptide is Vitamin D(3) 25-hydroxylase (CYP2D25) (Sus scrofa (Pig)).